Reading from the N-terminus, the 313-residue chain is Ribosomal RNA small subunit methyltransferase H (313 aa).

S-adenosyl-L-methionine-binding positions include 35-37 (GGH), Asp-55, Phe-81, Asp-103, and Gln-110.

Belongs to the methyltransferase superfamily. RsmH family.

It is found in the cytoplasm. It carries out the reaction cytidine(1402) in 16S rRNA + S-adenosyl-L-methionine = N(4)-methylcytidine(1402) in 16S rRNA + S-adenosyl-L-homocysteine + H(+). Its function is as follows. Specifically methylates the N4 position of cytidine in position 1402 (C1402) of 16S rRNA. This Pseudomonas syringae pv. tomato (strain ATCC BAA-871 / DC3000) protein is Ribosomal RNA small subunit methyltransferase H.